Here is a 376-residue protein sequence, read N- to C-terminus: Pyrimidine monooxygenase RutA (376 aa).

FMN-binding positions include 61-62, Asn127, Glu136, 152-153, and Ser202; these read IK and RY.

This sequence belongs to the NtaA/SnaA/DszA monooxygenase family. RutA subfamily.

The catalysed reaction is uracil + FMNH2 + NADH + O2 = (Z)-3-ureidoacrylate + FMN + NAD(+) + H2O + H(+). It catalyses the reaction thymine + FMNH2 + NADH + O2 = (Z)-2-methylureidoacrylate + FMN + NAD(+) + H2O + H(+). Catalyzes the pyrimidine ring opening between N-3 and C-4 by an unusual flavin hydroperoxide-catalyzed mechanism, adding oxygen atoms in the process to yield ureidoacrylate peracid, that immediately reacts with FMN forming ureidoacrylate and FMN-N(5)-oxide. The FMN-N(5)-oxide reacts spontaneously with NADH to produce FMN. Requires the flavin reductase RutF to regenerate FMN in vivo. The chain is Pyrimidine monooxygenase RutA from Methylorubrum extorquens (strain CM4 / NCIMB 13688) (Methylobacterium extorquens).